A 39-amino-acid polypeptide reads, in one-letter code: Photosystem II reaction center protein J (39 aa).

A helical membrane pass occupies residues 9 to 29 (LWLVVTFGGIVVLTVLGIFIY).

Belongs to the PsbJ family. In terms of assembly, PSII is composed of 1 copy each of membrane proteins PsbA, PsbB, PsbC, PsbD, PsbE, PsbF, PsbH, PsbI, PsbJ, PsbK, PsbL, PsbM, PsbT, PsbY, PsbZ, Psb30/Ycf12, at least 3 peripheral proteins of the oxygen-evolving complex and a large number of cofactors. It forms dimeric complexes.

Its subcellular location is the plastid. It localises to the chloroplast thylakoid membrane. Its function is as follows. One of the components of the core complex of photosystem II (PSII). PSII is a light-driven water:plastoquinone oxidoreductase that uses light energy to abstract electrons from H(2)O, generating O(2) and a proton gradient subsequently used for ATP formation. It consists of a core antenna complex that captures photons, and an electron transfer chain that converts photonic excitation into a charge separation. In Cyanidium caldarium (Red alga), this protein is Photosystem II reaction center protein J.